Reading from the N-terminus, the 274-residue chain is GATA transcription factor 1 (274 aa).

2 disordered regions span residues 1-39 and 102-132; these read MEME…KTGL and SPVS…TAVA. The Nuclear localization signal motif lies at 152–159; sequence KARSKRRR. The segment at 190–244 adopts a GATA-type zinc-finger fold; that stretch reads LIMGRKCQHCGAEKTPQWRAGPAGPKTLCNACGVRYKSGRLVPEYRPANSPTFTA.

It belongs to the type IV zinc-finger family. Class A subfamily. Mostly expressed in roots. Also expressed in stems, flowers and leaves.

The protein resides in the nucleus. In terms of biological role, transcriptional activator that specifically binds 5'-GATA-3' or 5'-GAT-3' motifs within gene promoters. May be involved in the regulation of some light-responsive genes. The sequence is that of GATA transcription factor 1 (GATA1) from Arabidopsis thaliana (Mouse-ear cress).